A 105-amino-acid chain; its full sequence is Large ribosomal subunit protein uL24 (105 aa).

The protein belongs to the universal ribosomal protein uL24 family. In terms of assembly, part of the 50S ribosomal subunit.

In terms of biological role, one of two assembly initiator proteins, it binds directly to the 5'-end of the 23S rRNA, where it nucleates assembly of the 50S subunit. Its function is as follows. One of the proteins that surrounds the polypeptide exit tunnel on the outside of the subunit. This is Large ribosomal subunit protein uL24 from Methylococcus capsulatus (strain ATCC 33009 / NCIMB 11132 / Bath).